Reading from the N-terminus, the 172-residue chain is Scytalone dehydratase (172 aa).

Residues Tyr30, Tyr50, and Phe53 each contribute to the substrate site. Catalysis depends on residues His85 and His110. Asn131 contacts substrate.

It belongs to the scytalone dehydratase family. Homotrimer. Each subunit contains an active site, located in the central part of the hydrophobic core of the monomer, which functions independently.

It localises to the endosome. It carries out the reaction scytalone = 1,3,8-trihydroxynaphthalene + H2O. It participates in pigment biosynthesis; melanin biosynthesis. With respect to regulation, (N-phenoxypropyl)-carboxamides such as carpropamid and derivatives of norephedrine act as inhibitors of scytalone dehydratase activity. Functionally, scytalone dehydratase; part of the gene cluster that mediates the biosynthesis of dihydroxynaphthalene melanin, a bluish-green pigment and a structural component of the conidial wall. Within the pathway, catalyzes the dehydration of scytalone as well as of vermelone. Is also able to dehydrate the alternate substrate 2,3-dihydro-2,5-dihydroxy-4H-benzopyran-4-one (DDBO) to 5-hydroxy-4H-1-benzopyran-4-one (HBO). In Pyricularia oryzae (strain 70-15 / ATCC MYA-4617 / FGSC 8958) (Rice blast fungus), this protein is Scytalone dehydratase (SDH1).